The primary structure comprises 234 residues: MLSVCYSDPCLSDFCQGKRPLRIASRNSNLAKAQVHECISLLRSWYPKLWFQLSTTETTGDREKKIPLHLVENSYFFTDGVDALVHKGVCDLAIHSAKDLPETPSLPVVAITRCLHPADLLVYADHYVHEPLPLSPRLGSSSLRRSAVLKQLFPQGQILDIRGTIEERLDQLHRGHYDAIVLAKAASLRLHLHHAYSIELPPPYHALQGSLAITAKDHAGKWKQLFTPIHCHSS.

The protein belongs to the HMBS family.

It carries out the reaction 4 porphobilinogen + H2O = hydroxymethylbilane + 4 NH4(+). Its pathway is porphyrin-containing compound metabolism; protoporphyrin-IX biosynthesis; coproporphyrinogen-III from 5-aminolevulinate: step 2/4. Functionally, tetrapolymerization of the monopyrrole PBG into the hydroxymethylbilane pre-uroporphyrinogen in several discrete steps. In Chlamydia pneumoniae (Chlamydophila pneumoniae), this protein is Probable porphobilinogen deaminase (hemC).